The following is a 573-amino-acid chain: L-lactate dehydrogenase (cytochrome) (573 aa).

A mitochondrion-targeting transit peptide spans 1–73 (MFKSQLRTAT…LYQKDKFISA (73 aa)). The region spanning 80 to 157 (DIELTPEIVS…PPEKHLGPLV (78 aa)) is the Cytochrome b5 heme-binding domain. Heme b contacts are provided by H115, H138, and Y208. The region spanning 182-542 (PPLSQMINLH…TPELLDTRSI (361 aa)) is the FMN hydroxy acid dehydrogenase domain. Residue Y208 coordinates pyruvate. FMN is bound by residues 260–263 (SATA), S290, and Q313. Position 315 (Y315) interacts with pyruvate. T341 serves as a coordination point for FMN. K357 contacts heme b. K408 contributes to the FMN binding site. H432 and R435 together coordinate pyruvate. FMN-binding positions include 468–472 (DGGVR) and 491–492 (GR).

This sequence in the N-terminal section; belongs to the cytochrome b5 family. In the C-terminal section; belongs to the FMN-dependent alpha-hydroxy acid dehydrogenase family. Homotetramer. FMN is required as a cofactor. Requires heme b as cofactor.

The protein localises to the mitochondrion intermembrane space. The enzyme catalyses (S)-lactate + 2 Fe(III)-[cytochrome c] = 2 Fe(II)-[cytochrome c] + pyruvate + 2 H(+). In terms of biological role, catalyzes the oxidation of (S)-lactate (L-lactate) to pyruvate with subsequent transfer of electrons to cytochrome c. Is involved in the utilization of (S)-lactate as a sole source of carbon for growth. This is L-lactate dehydrogenase (cytochrome) (CYB2) from Wickerhamomyces anomalus (Yeast).